Reading from the N-terminus, the 560-residue chain is Bifunctional NAD(P)H-hydrate repair enzyme (560 aa).

Residues 1–241 form an NAD(P)H-hydrate epimerase region; that stretch reads MLSRLSERCS…WMTAPERMRA (241 aa). Residues 29-235 form the YjeF N-terminal domain; it reads LRDAEPAAAA…SLGLEDWMTA (207 aa). The tract at residues 77–81 is NADPHX 1; for epimerase activity; the sequence is NNGGD. Positions 78 and 145 each coordinate K(+). The NADPHX 1; for epimerase activity stretch occupies residues 149 to 155; that stretch reads GTGICGP. The (6S)-NADPHX site is built by tyrosine 160 and aspartate 178. Residue serine 181 participates in K(+) binding. In terms of domain architecture, YjeF C-terminal spans 249–547; that stretch reads LDDVYEYFGI…HRVPLIVNAS (299 aa). The interval 249-560 is ADP-dependent (S)-NAD(P)H-hydrate dehydratase; it reads LDDVYEYFGI…PATRQRSSGP (312 aa). (6S)-NADPHX is bound at residue glycine 351. Residues 417–423 are NADPHX 2; for dehydratase activity; sequence HPGEAAR. Residues 454–458 and 475–484 contribute to the ADP site; these read KGPGT and NAGMASGGMG. Aspartate 485 serves as a coordination point for (6S)-NADPHX.

The protein in the N-terminal section; belongs to the NnrE/AIBP family. This sequence in the C-terminal section; belongs to the NnrD/CARKD family. The cofactor is K(+).

The enzyme catalyses (6S)-NADHX + ADP = AMP + phosphate + NADH + H(+). It carries out the reaction (6S)-NADPHX + ADP = AMP + phosphate + NADPH + H(+). It catalyses the reaction (6R)-NADHX = (6S)-NADHX. The catalysed reaction is (6R)-NADPHX = (6S)-NADPHX. Functionally, bifunctional enzyme that catalyzes the epimerization of the S- and R-forms of NAD(P)HX and the dehydration of the S-form of NAD(P)HX at the expense of ADP, which is converted to AMP. This allows the repair of both epimers of NAD(P)HX, a damaged form of NAD(P)H that is a result of enzymatic or heat-dependent hydration. The sequence is that of Bifunctional NAD(P)H-hydrate repair enzyme from Leishmania infantum.